Here is a 940-residue protein sequence, read N- to C-terminus: UvrABC system protein A (940 aa).

31–38 (GLSGSGKS) contributes to the ATP binding site. The segment at 252–279 (CPQCGYSMQELEPRLFSFNNPAGACGTC) adopts a C4-type zinc-finger fold. ABC transporter domains lie at 309 to 586 (WDQK…PNSL) and 606 to 936 (RDPK…RFLK). Residue 639 to 646 (GVSGSGKS) participates in ATP binding. The C4-type zinc-finger motif lies at 739 to 765 (CEACQGDGVIKVEMHFLPDVYVPCDVC).

This sequence belongs to the ABC transporter superfamily. UvrA family. In terms of assembly, forms a heterotetramer with UvrB during the search for lesions.

The protein localises to the cytoplasm. In terms of biological role, the UvrABC repair system catalyzes the recognition and processing of DNA lesions. UvrA is an ATPase and a DNA-binding protein. A damage recognition complex composed of 2 UvrA and 2 UvrB subunits scans DNA for abnormalities. When the presence of a lesion has been verified by UvrB, the UvrA molecules dissociate. The polypeptide is UvrABC system protein A (Vibrio parahaemolyticus serotype O3:K6 (strain RIMD 2210633)).